The primary structure comprises 446 residues: Signal recognition particle protein (446 aa).

GTP-binding positions include 108-115 (GLQGAGKT), 191-195 (DTAGR), and 249-252 (TKLD).

This sequence belongs to the GTP-binding SRP family. SRP54 subfamily. Part of the signal recognition particle protein translocation system, which is composed of SRP and FtsY. Interacts with a small cytoplasmic RNA (sc-RNA).

The protein resides in the cytoplasm. The catalysed reaction is GTP + H2O = GDP + phosphate + H(+). Its function is as follows. Involved in targeting and insertion of nascent membrane proteins into the cytoplasmic membrane. Binds to the hydrophobic signal sequence of the ribosome-nascent chain (RNC) as it emerges from the ribosomes. The SRP-RNC complex is then targeted to the cytoplasmic membrane where it interacts with the SRP receptor FtsY. Interaction with FtsY leads to the transfer of the RNC complex to the Sec translocase for insertion into the membrane, the hydrolysis of GTP by both Ffh and FtsY, and the dissociation of the SRP-FtsY complex into the individual components. The chain is Signal recognition particle protein from Bacillus subtilis (strain 168).